We begin with the raw amino-acid sequence, 513 residues long: ATP synthase subunit alpha (513 aa).

ATP is bound at residue 169–176 (GDRQTGKT).

This sequence belongs to the ATPase alpha/beta chains family. In terms of assembly, F-type ATPases have 2 components, CF(1) - the catalytic core - and CF(0) - the membrane proton channel. CF(1) has five subunits: alpha(3), beta(3), gamma(1), delta(1), epsilon(1). CF(0) has three main subunits: a(1), b(2) and c(9-12). The alpha and beta chains form an alternating ring which encloses part of the gamma chain. CF(1) is attached to CF(0) by a central stalk formed by the gamma and epsilon chains, while a peripheral stalk is formed by the delta and b chains.

Its subcellular location is the cell inner membrane. The catalysed reaction is ATP + H2O + 4 H(+)(in) = ADP + phosphate + 5 H(+)(out). In terms of biological role, produces ATP from ADP in the presence of a proton gradient across the membrane. The alpha chain is a regulatory subunit. The sequence is that of ATP synthase subunit alpha from Bordetella petrii (strain ATCC BAA-461 / DSM 12804 / CCUG 43448).